Reading from the N-terminus, the 392-residue chain is Lipid-A-disaccharide synthase (392 aa).

The protein belongs to the LpxB family.

The catalysed reaction is a lipid X + a UDP-2-N,3-O-bis[(3R)-3-hydroxyacyl]-alpha-D-glucosamine = a lipid A disaccharide + UDP + H(+). The protein operates within bacterial outer membrane biogenesis; LPS lipid A biosynthesis. Its function is as follows. Condensation of UDP-2,3-diacylglucosamine and 2,3-diacylglucosamine-1-phosphate to form lipid A disaccharide, a precursor of lipid A, a phosphorylated glycolipid that anchors the lipopolysaccharide to the outer membrane of the cell. The chain is Lipid-A-disaccharide synthase from Bradyrhizobium diazoefficiens (strain JCM 10833 / BCRC 13528 / IAM 13628 / NBRC 14792 / USDA 110).